Reading from the N-terminus, the 386-residue chain is UDP-N-acetylbacillosamine transaminase (386 aa).

Residues 25–28 (NYIA), Ala56, and Ser179 contribute to the substrate site. N6-(pyridoxal phosphate)lysine is present on Lys184. Substrate-binding positions include Asn227 and 325 to 328 (QIET).

It belongs to the DegT/DnrJ/EryC1 family. It depends on pyridoxal 5'-phosphate as a cofactor.

The enzyme catalyses UDP-N-acetylbacillosamine + 2-oxoglutarate = UDP-2-acetamido-2,6-dideoxy-alpha-D-xylo-hex-4-ulose + L-glutamate. Its pathway is protein modification; protein glycosylation. Aminotransferase involved in the bacillosamine biosynthesis pathway by producing UDP-4-amino-4,6-dideoxy-alpha-D-GlcNAc (UDP-2-acetamido-4-amino-2,4,6-trideoxy-alpha-D-glucopyranose), a precursor used in the production of the glycan component 2,4-diacetamido-2,4,6-trideoxy-alpha-D-glucopyranose. Required for host colonization and virulence. Involved in the N-linked protein glycosylation pathway. This chain is UDP-N-acetylbacillosamine transaminase (pglE), found in Campylobacter jejuni subsp. jejuni serotype O:2 (strain ATCC 700819 / NCTC 11168).